A 1142-amino-acid polypeptide reads, in one-letter code: Error-prone DNA polymerase (1142 aa).

A disordered region spans residues 291–361 (TSSPAQAARE…GTGAAAGTDR (71 aa)). Composition is skewed to low complexity over residues 311 to 320 (LRASLPAERP) and 327 to 344 (GPAASAPEGPASSEPGEP). Residues 345–355 (GLAGAGGGTGA) show a composition bias toward gly residues.

The protein belongs to the DNA polymerase type-C family. DnaE2 subfamily.

Its subcellular location is the cytoplasm. The enzyme catalyses DNA(n) + a 2'-deoxyribonucleoside 5'-triphosphate = DNA(n+1) + diphosphate. Functionally, DNA polymerase involved in damage-induced mutagenesis and translesion synthesis (TLS). It is not the major replicative DNA polymerase. The polypeptide is Error-prone DNA polymerase (Anaeromyxobacter dehalogenans (strain 2CP-1 / ATCC BAA-258)).